Here is a 120-residue protein sequence, read N- to C-terminus: NAD(P)H-quinone oxidoreductase subunit 3, chloroplastic (120 aa).

3 helical membrane-spanning segments follow: residues 9–29 (IFWA…LISG), 64–84 (MFAL…PWAM), and 88–108 (VLGV…IVGS).

The protein belongs to the complex I subunit 3 family. In terms of assembly, NDH is composed of at least 16 different subunits, 5 of which are encoded in the nucleus.

It is found in the plastid. The protein resides in the chloroplast thylakoid membrane. The catalysed reaction is a plastoquinone + NADH + (n+1) H(+)(in) = a plastoquinol + NAD(+) + n H(+)(out). The enzyme catalyses a plastoquinone + NADPH + (n+1) H(+)(in) = a plastoquinol + NADP(+) + n H(+)(out). Functionally, NDH shuttles electrons from NAD(P)H:plastoquinone, via FMN and iron-sulfur (Fe-S) centers, to quinones in the photosynthetic chain and possibly in a chloroplast respiratory chain. The immediate electron acceptor for the enzyme in this species is believed to be plastoquinone. Couples the redox reaction to proton translocation, and thus conserves the redox energy in a proton gradient. This Platanus occidentalis (Sycamore) protein is NAD(P)H-quinone oxidoreductase subunit 3, chloroplastic.